The following is a 210-amino-acid chain: MGTWILFACLLGAAFAMPLPPHPGSPGYINLSYEKSHSQAINTDRTALVLTPLKWYQSMIRQPYPSYGYEPMGGWLHHQIIPVLSQQHPPSHTLQPHHHLPVVPAQQPVAPQQPMMPVPGHHSMTPTQHHQPNIPPSAQQPFQQPFQPQAIPPQSHQPMQPQSPLHPMQPLAPQPPLPPLFSMQPLSPILPELPLEAWPATDKTKREEVD.

A signal peptide spans 1–16 (MGTWILFACLLGAAFA). Residue S32 is modified to Phosphoserine. 2 stretches are compositionally biased toward low complexity: residues 109–119 (VAPQQPMMPVP) and 136–169 (PSAQQPFQQPFQPQAIPPQSHQPMQPQSPLHPMQ). Positions 109-187 (VAPQQPMMPV…PPLFSMQPLS (79 aa)) are disordered. Over residues 170–179 (PLAPQPPLPP) the composition is skewed to pro residues.

The protein belongs to the amelogenin family. In terms of assembly, interacts with KRT5. Post-translationally, several forms are produced by C-terminal processing. In terms of processing, phosphorylated by FAM20C in vitro.

The protein localises to the secreted. The protein resides in the extracellular space. It is found in the extracellular matrix. In terms of biological role, plays a role in the biomineralization of teeth. Seems to regulate the formation of crystallites during the secretory stage of tooth enamel development. Thought to play a major role in the structural organization and mineralization of developing enamel. This is Amelogenin, X isoform (Amelx) from Mus musculus (Mouse).